A 351-amino-acid polypeptide reads, in one-letter code: Transaldolase (351 aa).

Lysine 138 acts as the Schiff-base intermediate with substrate in catalysis.

This sequence belongs to the transaldolase family. Type 2 subfamily.

The protein localises to the cytoplasm. The catalysed reaction is D-sedoheptulose 7-phosphate + D-glyceraldehyde 3-phosphate = D-erythrose 4-phosphate + beta-D-fructose 6-phosphate. It functions in the pathway carbohydrate degradation; pentose phosphate pathway; D-glyceraldehyde 3-phosphate and beta-D-fructose 6-phosphate from D-ribose 5-phosphate and D-xylulose 5-phosphate (non-oxidative stage): step 2/3. Transaldolase is important for the balance of metabolites in the pentose-phosphate pathway. In Neisseria gonorrhoeae (strain ATCC 700825 / FA 1090), this protein is Transaldolase.